Consider the following 560-residue polypeptide: MSSNISAIPNSLEVIRRSAQFQASVWGDYFLSYHSLSPEKGNKVMEKQTEELKEEIKRELNSTTKDEEPEKLRLIDSIQRLGVCYHFEYEINKILEQLHHITITSKNNGDDHPYNMTLRFRLLRQQGYNISSKSFERFRGKWESSYDKNVEELLSLYEASQLRMRGEEALDEAFRFATAQLEAIVQDPTTDPTVVGEVCQALKWPMYKNLPRLQASHYIGLYSEKPWRNESLPNFAKMDFSKLQKLHQKEIAYISKWWDDYGFAEKLSFARNRIVEGYFFALGIFFEPQLSTARLIMTKIIAIGSVLDDIYDVYGTFEELKLLTLALERWDKSETKKLPKYMKMYYEALLDVFEEIEQEMSQKETTPYCIHQMKEATKELGRVFLVEAKWCKEGYTPTVEEYLDIALISFGHKLLMVTALLGMGSTIATQQIVQWITSMPNILKASAIICRLMNDIVSHKFEQERGHVASAIECYMEQNYMSEHDVLIILGKQIDEFWKDMVENYCVVITEEEVPRGVLMRVLNLTRLFNVIYKDGDGYTQSHGSTKTHIKSLLVDSLPL.

Mg(2+)-binding residues include D308, D312, and E462. Positions 308–312 match the DDXXD motif motif; that stretch reads DDIYD.

It belongs to the terpene synthase family. Tpsa subfamily. Mg(2+) is required as a cofactor. In terms of tissue distribution, expressed in the rind tissues of ripe fruits.

The protein localises to the cytoplasm. The catalysed reaction is (2E,6E)-farnesyl diphosphate = (3E,6E)-alpha-farnesene + diphosphate. It participates in secondary metabolite biosynthesis; terpenoid biosynthesis. Sesquiterpene synthase producing exclusively alpha-farnesene. Associated with the production of sesquiterpenes responsible for the aroma of the fruit. This is Alpha-farnesene synthase from Cucumis melo (Muskmelon).